Consider the following 644-residue polypeptide: Macrolide export ATP-binding/permease protein MacB (644 aa).

Residues 4 to 242 (IECKNINRYF…SNVGRIQEKA (239 aa)) form the ABC transporter domain. 40–47 (GQSGSGKS) contributes to the ATP binding site. 4 helical membrane passes run 270–290 (LLTMLGIIIGIASVVSVVALG), 524–544 (IALISLVVGGIGVMNIMLVSV), 574–594 (LICVIGGLVGVGLSAAVSLVF), and 607–627 (AMSVIGAVACSTGIGIAFGFM).

Belongs to the ABC transporter superfamily. Macrolide exporter (TC 3.A.1.122) family. Homodimer.

It localises to the cell inner membrane. In terms of biological role, non-canonical ABC transporter that contains transmembrane domains (TMD), which form a pore in the inner membrane, and an ATP-binding domain (NBD), which is responsible for energy generation. Confers resistance against macrolides. This is Macrolide export ATP-binding/permease protein MacB from Neisseria meningitidis serogroup A / serotype 4A (strain DSM 15465 / Z2491).